The following is a 371-amino-acid chain: Anhydro-N-acetylmuramic acid kinase (371 aa).

Residue 10–17 (GTSLDGID) coordinates ATP.

It belongs to the anhydro-N-acetylmuramic acid kinase family.

It catalyses the reaction 1,6-anhydro-N-acetyl-beta-muramate + ATP + H2O = N-acetyl-D-muramate 6-phosphate + ADP + H(+). The protein operates within amino-sugar metabolism; 1,6-anhydro-N-acetylmuramate degradation. It functions in the pathway cell wall biogenesis; peptidoglycan recycling. In terms of biological role, catalyzes the specific phosphorylation of 1,6-anhydro-N-acetylmuramic acid (anhMurNAc) with the simultaneous cleavage of the 1,6-anhydro ring, generating MurNAc-6-P. Is required for the utilization of anhMurNAc either imported from the medium or derived from its own cell wall murein, and thus plays a role in cell wall recycling. This is Anhydro-N-acetylmuramic acid kinase from Chromohalobacter salexigens (strain ATCC BAA-138 / DSM 3043 / CIP 106854 / NCIMB 13768 / 1H11).